A 696-amino-acid polypeptide reads, in one-letter code: MARKTPIERYRNIGVMAHIDAGKTTTTERILFYTGVSHKLGEVHDGAATMDWMEQEQERGITITSAATTCFWKGMDHNYPDHRINIIDTPGHVDFTIEVERSLRVLDGACTVFCAVGGVQPQTETVWRQANKYKVPRLAFVNKMDRAGANFMRVYEQIQSRLKAHPVPIQLPIGAEDKFEGVVDLIKMKAIHWDDASQGMRFEERDIPANMVEDAKSWREKMVESAAEANEELMNKYLEEGDLSPADIKQGLRIRTLANEIVPMLCGSAFKNKGVQAMLDAVLDYLPSPADIEAIDGEKESGEHAERHASDEEPFAGLAFKIATDPYVGQLIFFRVYSGVVTSGDTVYNPIKGRKERIGRLLQMHANQREEIKEVRAGDIAAAVGLKEAVTGDTLCDPADVITLERMVFPEPVIHVAVEPKTKLDQEKMGIALNRLAQEDPSFRVRTDEESGQTIISGMGELHLEIIVDRMKREFGVEANVGAPQVAYREAIRKSVDVEGKFIKQSGGRGQYGHVWIKMEQNEAGKGFEFIDAIKGGTVPREYIPAVQKGLEETLPNGVLAGFPVVDVKVTLFDGSYHDVDSNENAFKMAASIAFKDGMRKANPVLLEPMMSVEVETPADFMGNVVGDLSSRRGMIQGMDDLPGLKVVRAEVPLAEMFGYATSLRSATQGRATYTMEFKHYAEAPKNVAEAIISKK.

One can recognise a tr-type G domain in the interval 8 to 290; it reads ERYRNIGVMA…AVLDYLPSPA (283 aa). GTP-binding positions include 17 to 24, 88 to 92, and 142 to 145; these read AHIDAGKT, DTPGH, and NKMD.

This sequence belongs to the TRAFAC class translation factor GTPase superfamily. Classic translation factor GTPase family. EF-G/EF-2 subfamily.

The protein localises to the cytoplasm. Functionally, catalyzes the GTP-dependent ribosomal translocation step during translation elongation. During this step, the ribosome changes from the pre-translocational (PRE) to the post-translocational (POST) state as the newly formed A-site-bound peptidyl-tRNA and P-site-bound deacylated tRNA move to the P and E sites, respectively. Catalyzes the coordinated movement of the two tRNA molecules, the mRNA and conformational changes in the ribosome. This Nitrosospira multiformis (strain ATCC 25196 / NCIMB 11849 / C 71) protein is Elongation factor G.